A 404-amino-acid polypeptide reads, in one-letter code: Floricaula/leafy-like protein FL1 (404 aa).

A disordered region spans residues 210–251 (IGVPEHSSESDERKADTNKQKRRRSKEPGEDGEDRPREHPFI). Basic and acidic residues-rich tracts occupy residues 215–228 (HSSE…DTNK) and 235–249 (KEPG…REHP). 3 DNA-binding regions span residues 246–250 (REHPF), 315–322 (NKPKMRHY), and 386–389 (YVPT).

Belongs to the FLO/LFY family. As to expression, expressed in both male and female cones, vegetative buds and needles, but not in the roots.

It localises to the nucleus. Its function is as follows. Probable transcription factor. The protein is Floricaula/leafy-like protein FL1 of Pinus radiata (Monterey pine).